A 376-amino-acid chain; its full sequence is Putative 12-oxophytodienoate reductase 2 (376 aa).

Residues 31–33 (PLT), Ala64, and Gln106 contribute to the FMN site. Position 178–181 (178–181 (HGAH)) interacts with substrate. Tyr183 (proton donor) is an active-site residue. FMN-binding positions include Arg230, Gly301, and 322–323 (GR).

Belongs to the NADH:flavin oxidoreductase/NADH oxidase family. It depends on FMN as a cofactor.

Functionally, putative oxophytodienoate reductase that may be involved in the biosynthesis or metabolism of oxylipin signaling molecules. The sequence is that of Putative 12-oxophytodienoate reductase 2 (OPR2) from Oryza sativa subsp. japonica (Rice).